The chain runs to 241 residues: uncharacterized protein (241 aa).

A run of 7 helical transmembrane segments spans residues 12 to 32 (ITEIYFQYVIYILCFGVLLLL), 39 to 59 (LLWLHLVSILVGLIANYEMKF), 89 to 109 (VYDVICHTIMVVICYHQICYT), 117 to 137 (YYTFHLFSVMIIIGALFNCVV), 152 to 172 (LFEYTTIFQALSTGYWVATML), 180 to 200 (IHFYSHWIIWIGLMTINWFVY), and 215 to 235 (YVEAVFIVCTWYSGIISSPLI).

Belongs to the mimivirus L68/R809 family.

Its subcellular location is the membrane. This is an uncharacterized protein from Acanthamoeba polyphaga mimivirus (APMV).